The primary structure comprises 388 residues: Mitochondrial distribution and morphology protein 12 (388 aa).

Residues 1–388 (MSLDINWSLL…VFPNFHTVAL (388 aa)) form the SMP-LTD domain. Disordered stretches follow at residues 75 to 101 (DDEG…RNEA) and 209 to 251 (PMSI…SSSS). Positions 83 to 101 (EEKQREKEREERDKLRNEA) are enriched in basic and acidic residues. Over residues 234-243 (PSPPAHPAGL) the composition is skewed to pro residues.

This sequence belongs to the MDM12 family. As to quaternary structure, component of the ER-mitochondria encounter structure (ERMES) or MDM complex, composed of MMM1, MDM10, MDM12 and MDM34. An MMM1 homodimer associates with one molecule of MDM12 on each side in a pairwise head-to-tail manner, and the SMP-LTD domains of MMM1 and MDM12 generate a continuous hydrophobic tunnel for phospholipid trafficking.

Its subcellular location is the mitochondrion outer membrane. The protein resides in the endoplasmic reticulum membrane. In terms of biological role, component of the ERMES/MDM complex, which serves as a molecular tether to connect the endoplasmic reticulum (ER) and mitochondria. Components of this complex are involved in the control of mitochondrial shape and protein biogenesis, and function in nonvesicular lipid trafficking between the ER and mitochondria. MDM12 is required for the interaction of the ER-resident membrane protein MMM1 and the outer mitochondrial membrane-resident beta-barrel protein MDM10. The MDM12-MMM1 subcomplex functions in the major beta-barrel assembly pathway that is responsible for biogenesis of all mitochondrial outer membrane beta-barrel proteins, and acts in a late step after the SAM complex. The MDM10-MDM12-MMM1 subcomplex further acts in the TOM40-specific pathway after the action of the MDM12-MMM1 complex. Essential for establishing and maintaining the structure of mitochondria and maintenance of mtDNA nucleoids. The protein is Mitochondrial distribution and morphology protein 12 of Cryptococcus neoformans var. neoformans serotype D (strain B-3501A) (Filobasidiella neoformans).